A 181-amino-acid chain; its full sequence is Shikimate kinase (181 aa).

Residue 17–22 (GAGKTT) coordinates ATP. T21 contacts Mg(2+). Substrate is bound by residues D39, R63, and G85. R122 is an ATP binding site. R141 is a binding site for substrate.

The protein belongs to the shikimate kinase family. As to quaternary structure, monomer. Mg(2+) is required as a cofactor.

Its subcellular location is the cytoplasm. It carries out the reaction shikimate + ATP = 3-phosphoshikimate + ADP + H(+). Its pathway is metabolic intermediate biosynthesis; chorismate biosynthesis; chorismate from D-erythrose 4-phosphate and phosphoenolpyruvate: step 5/7. Functionally, catalyzes the specific phosphorylation of the 3-hydroxyl group of shikimic acid using ATP as a cosubstrate. The polypeptide is Shikimate kinase (Trichormus variabilis (strain ATCC 29413 / PCC 7937) (Anabaena variabilis)).